The sequence spans 326 residues: Microtubule-associated protein RP/EB family member 2 (326 aa).

Serine 9 carries the post-translational modification Phosphoserine. One can recognise a Calponin-homology (CH) domain in the interval 56-158 (TMSRHDIIAW…FIQWFKKFYD (103 aa)). Tyrosine 166 bears the Phosphotyrosine mark. Disordered regions lie at residues 170–239 (EARQ…DKDL) and 297–326 (YASD…QEEY). A DCTN1-binding region spans residues 186–326 (QIFNLPKKSH…DQQPQQQEEY (141 aa)). The segment covering 199–233 (SPTAGAAKSSPAAKPGSTPSRPSSAKRASSSGSAS) has biased composition (low complexity). Phosphoserine occurs at positions 218 and 235. Residues 235–305 (SDKDLETQVI…LYASDEQEGQ (71 aa)) form the EB1 C-terminal domain. The segment at 258–301 (EGVEKERDFYFGKLREIELLCQEHGQENDDLVQRLMEVLYASDE) is APC-binding. The span at 300 to 312 (DEQEGQTEEPEVE) shows a compositional bias: acidic residues. A compositionally biased stretch (low complexity) spans 317–326 (DQQPQQQEEY).

It belongs to the MAPRE family. Interacts with DCTN1. Interacts with APC (via C-terminal). Interacts with monomeric and polymerized tubulin. Interacts with SLAIN1. Interacts (via the N-terminal region) with BAG1. Interacts with ASB14. Interacts with HAX1; this interaction is essential for epidermal cell migration. In terms of processing, phosphorylated at Ser-235 by CK2 leading to enhanced cell adhesion. Phosphorylated by CDK1 and AURKB during mitosis reduces the binding affinity of MAPRE2 for microtubules. Ubiquitinated in an ASB14-dependent manner; leading to proteasomal degradation.

Its subcellular location is the cytoplasm. The protein localises to the cytoskeleton. Adapter protein that is involved in microtubule polymerization, and spindle function by stabilizing microtubules and anchoring them at centrosomes. Therefore, ensures mitotic progression and genome stability. Acts as a central regulator of microtubule reorganization in apico-basal epithelial differentiation. Plays a role during oocyte meiosis by regulating microtubule dynamics. Participates in neurite growth by interacting with plexin B3/PLXNB3 and microtubule reorganization during apico-basal epithelial differentiation. Also plays an essential role for cell migration and focal adhesion dynamics. Mechanistically, recruits HAX1 to microtubules in order to regulate focal adhesion dynamics. The chain is Microtubule-associated protein RP/EB family member 2 (Mapre2) from Rattus norvegicus (Rat).